A 1789-amino-acid polypeptide reads, in one-letter code: Genome polyprotein (1789 aa).

The disordered stretch occupies residues Met1–Lys25. Residues Met1–Arg183 are interaction with host MAP1LC3A/LC3. Low complexity predominate over residues Ala12–Ser23. An interaction with NTPase region spans residues Ser184–Gln398. Positions His301–Gln398 are interaction with NS4. Host ER membrane association stretches follow at residues Lys318–Asn349 and Thr360–Gln398. An interaction with NS1-2 and NS4 and homooligomerization region spans residues Gly399 to Ala574. Residues Arg532–Asp697 form the SF3 helicase domain. Residue Gly560–Thr567 participates in ATP binding. Residues Ala651–Asp756 form an important for mitochondrion targeting region. Residues Tyr826–Gly832 are functions as endoplasmic reticulum export signal. A host membrane association region spans residues Arg865–Pro910. The interval Asp958–Ala981 is disordered. The span at Lys966–Lys976 shows a compositional bias: basic residues. Residues Asp989–Glu994 are acidic. Tyr992 is modified (O-(5'-phospho-RNA)-tyrosine). Positions Trp1084–Glu1100 are interaction with host EIF4G. The 181-residue stretch at Ala1101–Glu1281 folds into the Peptidase C37 domain. Residues His1130, Glu1154, and Cys1239 each act as for 3CLpro activity in the active site. A RdRp catalytic domain is found at Lys1516–Arg1637. Residues Asp1520, Asp1522, Asp1624, and Glu1625 each coordinate Mg(2+).

Homodimer. Homooligomer. Interacts with NTPase; this interaction increases the proapoptotic activity of the NTPase and is crucial for the formation of the viral replication complex. Interacts with NS4; this interaction is crucial for the formation of the viral replication complex. Interacts (via N-terminus) with host VAPA. Interacts with host MAP1LC3A/LC3; this interaction does not seem to be linked to host autophagy, but rather plays a role in the formation of viral factories. As to quaternary structure, homooligomer. Interacts with NS1-2; this interaction increases the proapoptotic activity of the NTPase and is crucial for the formation of the viral replication complex. Interacts with NS4; this interaction increases the proapoptotic activity of the NTPase. In terms of assembly, homodimer. Monomer; in solution. Interacts with NTPase; this interaction increases the proapoptotic activity of the NTPase. Interacts with NS1-2; this interaction is crucial for the formation of the viral replication complex. As to quaternary structure, monomer. Interacts with the RNA-directed RNA polymerase; this interaction induces the multimerization of the RdRp and enhances its activity. Interacts with host IEF4G1; this interaction plays a role in translation of viral proteins. In terms of assembly, homohexamer; also forms fibrous hexameric oligomer. Interacts with the viral genome-linked protein; this interaction induces the multimerization of the RdRp and enhances its activity. The cofactor is Mg(2+). Mn(2+) is required as a cofactor. Specific enzymatic cleavages in vivo yield mature proteins. 3CLpro is first autocatalytically cleaved, then processes the whole polyprotein. NS1/2-3 and NS3-4 sites are cleaved rapidly and NS4-5, NS5-6, and NS6-7 sites are processed subsequently and less efficiently. Post-translationally, VPg is uridylylated by the polymerase and is covalently attached to the 5'-end of the polyadenylated genomic and subgenomic RNAs. This uridylylated form acts as a nucleotide-peptide primer for the polymerase. In terms of processing, cleaved by host CASP3/caspase 3 at 18-22 h.p.i. The cleavage allows NS1 secretion, which is essential for intestinal infection and resistance to IFN-lambda.

The protein localises to the host Golgi apparatus membrane. It is found in the secreted. The protein resides in the host endoplasmic reticulum membrane. Its subcellular location is the host cytoplasm. It localises to the host perinuclear region. It carries out the reaction a ribonucleoside 5'-triphosphate + H2O = a ribonucleoside 5'-diphosphate + phosphate + H(+). It catalyses the reaction Endopeptidase with a preference for cleavage when the P1 position is occupied by Glu-|-Xaa and the P1' position is occupied by Gly-|-Yaa.. The catalysed reaction is RNA(n) + a ribonucleoside 5'-triphosphate = RNA(n+1) + diphosphate. Inhibited by the chemical compound K36/GC376, which covalently binds to the nucleophilic cysteine residue. Inhibited by various macrocyclic inhibitors. Its activity is regulated as follows. Inhibited by the guanidine salt GuHCl. Its function is as follows. Induces the proliferation of the host smooth ER membranes forming long tubular structures. These remodeled membranes probably form the viral factories that contain the replication complex. Induces the disassembly of host Golgi. May play a role in viral replication by interacting with host VAPA, a vesicle-associated membrane protein that plays a role in SNARE-mediated vesicle fusion. This interaction may target replication complex to intracellular membranes. Functionally, displays NTPase activity and RNA helix-unwinding activity. Displays RNA chaperone-like activity and destabilizes dsRNA. Induces the formation of convoluted membranes derived from the host ER. These remodeled membranes probably form the viral factories that contain the replication complex. Initiates host cell death by targeting the mitochondrial outer membrane, leading to the permeabilization of mitochondria, programmed host cell death and viral egress. Probably plays a role in preventing the assembly of host stress granules. Probable key protein responsible for the formation of membrane alterations by the virus. Induces the formation of convoluted membranes derived from the host ER. These remodeled membranes probably form the viral factories that contain the replication complex. May play a role in targeting replication complex to intracellular membranes. Induces the disassembly of host Golgi and antagonism of Golgi-dependent cellular protein secretion, probably via the mislocalization of COPII-coated vesicles. In terms of biological role, viral genome-linked protein is covalently linked to the 5'-end of the positive-strand, negative-strand genomic RNAs and subgenomic RNA. Acts as a genome-linked replication primer. May recruit ribosome to viral RNA thereby promoting viral proteins translation. Interacts with host translation initiation complex to allow the translation of viral proteins. Induces the formation of aggregates of RNA-directed RNA polymerase in the presence of RNA. Through its interaction with the viral RNA-directed RNA polymerase, plays a crucial role in enhancing the polymerase activity. Its function is as follows. Processes the polyprotein. 3CLpro-RdRp is first released by autocleavage, then all other proteins are cleaved. May cleave host polyadenylate-binding protein thereby inhibiting cellular translation. Functionally, replicates genomic and antigenomic RNA by recognizing replications specific signals. Also transcribes a subgenomic mRNA by initiating RNA synthesis internally on antigenomic RNA. This sgRNA codes for structural proteins. Catalyzes the covalent attachment VPg with viral RNAs. The sequence is that of Genome polyprotein from Norovirus (strain Human/NoV/United States/Norwalk/1968/GI) (Hu/NV/NV/1968/US).